The sequence spans 299 residues: Ribosome-inactivating protein saporin-6 (299 aa).

Positions Met-1–Ala-24 are cleaved as a signal peptide. The active site involves Glu-200. The propeptide occupies Ser-278 to Thr-299. An N-linked (GlcNAc...) asparagine glycan is attached at Asn-283.

Belongs to the ribosome-inactivating protein family. Type 1 RIP subfamily. As to expression, seeds and leaves of the plant.

The enzyme catalyses Endohydrolysis of the N-glycosidic bond at one specific adenosine on the 28S rRNA.. Its function is as follows. Ribosome-inactivating protein of type 1, inhibits protein synthesis in animal cells. Useful as immunotoxin for pharmacological applications. This chain is Ribosome-inactivating protein saporin-6 (SAP6), found in Saponaria officinalis (Common soapwort).